The primary structure comprises 122 residues: Ribosome-binding factor A (122 aa).

Belongs to the RbfA family. As to quaternary structure, monomer. Binds 30S ribosomal subunits, but not 50S ribosomal subunits or 70S ribosomes.

The protein resides in the cytoplasm. One of several proteins that assist in the late maturation steps of the functional core of the 30S ribosomal subunit. Associates with free 30S ribosomal subunits (but not with 30S subunits that are part of 70S ribosomes or polysomes). Required for efficient processing of 16S rRNA. May interact with the 5'-terminal helix region of 16S rRNA. The chain is Ribosome-binding factor A from Opitutus terrae (strain DSM 11246 / JCM 15787 / PB90-1).